The sequence spans 481 residues: MYSNRKECPRRVKSFDSVNSGLDENQINNEFNKSTYIKIEDNKEYSENVCERGKASVIFSLKNEIGGLVKALKLFQEKHVNLIHIESRKSKRRNSEFEIFVDCDSNREQLNEIFQLLKPHVNVISMSPPENFTVQEDDMESVPWFPKKISDLDKCANRVLMYGSDLDADHPGFKDNVYRKRRKYFADVAMSYKYGDPIPHIEFTEEEIQTWGTVFRELNKLYPTHACREYLKNLPLLSKHCGYREDNIPQLEDVSRFLRERTGFTIRPVAGYLSPRDFLAGLAFRVFHCTQYVRHDSDPLNTPEPDTCHELLGHVPLLAEPSFAQFSQEIGLASLGASDEAVQKLATCYFFTVEFGLCKQEGKLKVYGAGLLSSISELKHSLSGNAKVKPFDPMVTCNQECIITSFQELYFVSESFEEAKEKMREFAKTIQRPFGLKYNPFTQSVDILKDTKSIAMVVRELRHELDIVNDALNKMNKQLGV.

Positions 56–131 (SVIFSLKNEI…NVISMSPPEN (76 aa)) constitute an ACT domain. L-tryptophan contacts are provided by Tyr-272, Arg-294, and Thr-302. Fe cation contacts are provided by His-309, His-314, and Glu-354. Residues Ser-373 and Ile-403 each contribute to the L-tryptophan site.

It belongs to the biopterin-dependent aromatic amino acid hydroxylase family. As to quaternary structure, homotetramer. It depends on Fe(2+) as a cofactor.

The catalysed reaction is (6R)-L-erythro-5,6,7,8-tetrahydrobiopterin + L-tryptophan + O2 = 5-hydroxy-L-tryptophan + (4aS,6R)-4a-hydroxy-L-erythro-5,6,7,8-tetrahydrobiopterin. The protein operates within aromatic compound metabolism; serotonin biosynthesis; serotonin from L-tryptophan: step 1/2. Oxidizes L-tryptophan to 5-hydroxy-l-tryptophan in the rate-determining step of serotonin biosynthesis. This Xenopus laevis (African clawed frog) protein is Tryptophan 5-hydroxylase (tph1).